We begin with the raw amino-acid sequence, 388 residues long: Putative F-box/kelch-repeat protein At2g29820 (388 aa).

Residues 6–33 are disordered; the sequence is EILDGPNGDDPNNNPQEGEDNQNENPQE. Residues 9-21 show a composition bias toward low complexity; the sequence is DGPNGDDPNNNPQ. Acidic residues predominate over residues 22–33; it reads EGEDNQNENPQE. Residues 38-84 form the F-box domain; it reads LRNLLELPEELIERLIAHIPRCYYPYISLVSRDFRQVITSDKLFRTR. Kelch repeat units follow at residues 140-187 and 189-233; these read KMYV…EIGG and IYVI…FSTY.

This Arabidopsis thaliana (Mouse-ear cress) protein is Putative F-box/kelch-repeat protein At2g29820.